Consider the following 360-residue polypeptide: Phospho-N-acetylmuramoyl-pentapeptide-transferase (360 aa).

Transmembrane regions (helical) follow at residues 21 to 41, 73 to 93, 94 to 114, 132 to 152, 168 to 188, 199 to 219, 239 to 259, 263 to 283, 288 to 308, and 338 to 358; these read YLTF…LWIG, TMGG…WGDL, SNPY…IGFV, WKYF…YALG, IMPQ…VGTS, GLAI…AWAT, LVIF…FNTY, VFMG…IAVL, FLLV…ILQV, and VIIR…VTLK.

Belongs to the glycosyltransferase 4 family. MraY subfamily. Requires Mg(2+) as cofactor.

It is found in the cell inner membrane. It carries out the reaction UDP-N-acetyl-alpha-D-muramoyl-L-alanyl-gamma-D-glutamyl-meso-2,6-diaminopimeloyl-D-alanyl-D-alanine + di-trans,octa-cis-undecaprenyl phosphate = di-trans,octa-cis-undecaprenyl diphospho-N-acetyl-alpha-D-muramoyl-L-alanyl-D-glutamyl-meso-2,6-diaminopimeloyl-D-alanyl-D-alanine + UMP. Its pathway is cell wall biogenesis; peptidoglycan biosynthesis. In terms of biological role, catalyzes the initial step of the lipid cycle reactions in the biosynthesis of the cell wall peptidoglycan: transfers peptidoglycan precursor phospho-MurNAc-pentapeptide from UDP-MurNAc-pentapeptide onto the lipid carrier undecaprenyl phosphate, yielding undecaprenyl-pyrophosphoryl-MurNAc-pentapeptide, known as lipid I. The protein is Phospho-N-acetylmuramoyl-pentapeptide-transferase of Mannheimia succiniciproducens (strain KCTC 0769BP / MBEL55E).